Here is a 721-residue protein sequence, read N- to C-terminus: Centlein (721 aa).

Residues 52–164 (KNEKAISEQT…LRDENEEVVN (113 aa)) are a coiled coil. Disordered regions lie at residues 156-180 (RDEN…KSEM) and 259-288 (ETSQ…QQEV). 2 stretches are compositionally biased toward basic and acidic residues: residues 165 to 178 (PEEK…KAKS) and 267 to 284 (IEND…DSRA). Coiled-coil stretches lie at residues 345-515 (LLRE…EDLK) and 573-626 (QSEQ…TQKS). The residue at position 658 (Thr658) is a Phosphothreonine.

As to quaternary structure, interacts with CEP250 and CEP68. Interacts with NEK2; the interaction leads to phosphorylation of CNTLN. In terms of processing, phosphorylated directly or indirectly by NEK2.

It is found in the cytoplasm. The protein localises to the cytoskeleton. The protein resides in the microtubule organizing center. Its subcellular location is the centrosome. It localises to the centriole. Its function is as follows. Required for centrosome cohesion and recruitment of CEP68 to centrosomes. This Rattus norvegicus (Rat) protein is Centlein.